The sequence spans 215 residues: SAGA complex/transcription factor TFIID complex subunit Taf10 (215 aa).

Residues 1 to 77 (MSDINNNEPA…SRERHGSNYV (77 aa)) form a disordered region. The segment covering 23–42 (GNNSMSVDEQPETSSTNLPT) has biased composition (polar residues). A compositionally biased stretch (basic and acidic residues) spans 58–73 (NNEDSPKSDDSRERHG). One can recognise a Histone-fold domain in the interval 58–203 (NNEDSPKSDD…VDDLSAALNE (146 aa)).

The protein belongs to the TAF10 family. Component of the 1.8 MDa SAGA (Spt-Ada-Gcn5 acetyltransferase) complex, which is composed of 19 subunits tra1, spt7, taf5, ngg1/ada3, sgf73, spt20, spt8, taf12, taf6, hfi1/ada1, ubp8, gcn5, ada2, spt3, sgf29, taf10, taf9, sgf11 and sus1. The SAGA complex is composed of 4 modules, namely the HAT (histone acetyltransferase) module (gcn5, ada2, ngg1/ada3 and sgf29), the DUB (deubiquitinating) module (ubp8, sgf11, sgf73 and sus1), the core or TAF (TBP-associated factor) module (taf5, taf6, taf9, taf10 and taf12), and the Tra1 or SPT (Suppressor of Ty) module (tra1, hfi1/ada1, spt3, spt7, spt8 and spt20). The Tra1/SPT module binds activators, the core module recruits TBP (TATA-binding protein), the HAT module contains the histone H3 acetyltransferase gcn5, and the DUB module comprises the histone H2B deubiquitinase ubp8. Component of the 1.2 MDa TFIID complex, which is composed of TATA-binding protein (TBP) and the 14 TBP-associated factors (TAFs). It comprises 1 copy of each taf1, taf2, taf3, taf7, taf8, taf11, taf13, 2 copies of each taf4, taf5, taf6, taf9, taf10, taf12, and 3 copies of taf14. In TFIID, taf10 heterodimerizes with taf3 and taf8.

The protein localises to the nucleus. Its function is as follows. Functions as a component of both the DNA-binding general transcription initiation factor complex TFIID and the transcription coactivator SAGA complex. Binding of TFIID to a promoter (with or without TATA element) is the initial step in pre-initiation complex (PIC) formation. TFIID plays a key role in the regulation of gene expression by RNA polymerase II through different activities such as transcription activator interaction, core promoter recognition and selectivity, TFIIA and TFIIB interaction, chromatin modification (histone acetylation by TAF1), facilitation of DNA opening and initiation of transcription. SAGA acts as a general cofactor required for essentially all RNA polymerase II transcription. At the promoters, SAGA is required for transcription pre-initiation complex (PIC) recruitment. It influences RNA polymerase II transcriptional activity through different activities such as TBP interaction (via core/TAF module) and promoter selectivity, interaction with transcription activators (via Tra1/SPT module), and chromatin modification through histone acetylation (via HAT module) and deubiquitination (via DUB module). SAGA preferentially acetylates histones H3 (to form H3K9ac, H3K14ac, H3K18ac and H3K23ac) and H2B and deubiquitinates histone H2B. SAGA interacts with DNA via upstream activating sequences (UASs). In Schizosaccharomyces pombe (strain 972 / ATCC 24843) (Fission yeast), this protein is SAGA complex/transcription factor TFIID complex subunit Taf10.